An 842-amino-acid chain; its full sequence is Translation initiation factor IF-2 (842 aa).

2 disordered regions span residues 1-41 and 112-219; these read MVAK…GFPD and RPNR…QTYQ. Basic and acidic residues-rich tracts occupy residues 32–41 and 153–165; these read PEDKKQGFPD and RRGE…RDFS. Residues 328 to 497 form the tr-type G domain; the sequence is ARPPVVTVMG…MLQAEVMELR (170 aa). The tract at residues 337–344 is G1; sequence GHVDHGKT. 337 to 344 provides a ligand contact to GTP; sequence GHVDHGKT. Residues 362–366 form a G2 region; sequence GITQH. Residues 383–386 are G3; sequence DTPG. Residues 383–387 and 437–440 contribute to the GTP site; these read DTPGH and NKID. Residues 437–440 are G4; the sequence is NKID. Residues 473–475 are G5; that stretch reads SAL.

It belongs to the TRAFAC class translation factor GTPase superfamily. Classic translation factor GTPase family. IF-2 subfamily.

Its subcellular location is the cytoplasm. In terms of biological role, one of the essential components for the initiation of protein synthesis. Protects formylmethionyl-tRNA from spontaneous hydrolysis and promotes its binding to the 30S ribosomal subunits. Also involved in the hydrolysis of GTP during the formation of the 70S ribosomal complex. This chain is Translation initiation factor IF-2 (infB), found in Treponema pallidum (strain Nichols).